Consider the following 372-residue polypeptide: 4-hydroxy-3-methylbut-2-en-1-yl diphosphate synthase (flavodoxin) (372 aa).

Residues Cys-270, Cys-273, Cys-305, and Glu-312 each contribute to the [4Fe-4S] cluster site.

Belongs to the IspG family. [4Fe-4S] cluster serves as cofactor.

The catalysed reaction is (2E)-4-hydroxy-3-methylbut-2-enyl diphosphate + oxidized [flavodoxin] + H2O + 2 H(+) = 2-C-methyl-D-erythritol 2,4-cyclic diphosphate + reduced [flavodoxin]. It participates in isoprenoid biosynthesis; isopentenyl diphosphate biosynthesis via DXP pathway; isopentenyl diphosphate from 1-deoxy-D-xylulose 5-phosphate: step 5/6. Its function is as follows. Converts 2C-methyl-D-erythritol 2,4-cyclodiphosphate (ME-2,4cPP) into 1-hydroxy-2-methyl-2-(E)-butenyl 4-diphosphate. The polypeptide is 4-hydroxy-3-methylbut-2-en-1-yl diphosphate synthase (flavodoxin) (Salmonella arizonae (strain ATCC BAA-731 / CDC346-86 / RSK2980)).